The following is a 165-amino-acid chain: Small ribosomal subunit protein uS3m (165 aa).

The N-terminal 30 residues, 1 to 30 (MNFLKKLLPQVATEVQQLSRSGFHTSSVCC), are a transit peptide targeting the mitochondrion.

The protein belongs to the universal ribosomal protein uS3 family. As to quaternary structure, component of the mitochondrial ribosome small subunit (28S) which comprises a 12S rRNA and about 30 distinct proteins.

The protein localises to the mitochondrion. The chain is Small ribosomal subunit protein uS3m (mRpS24) from Drosophila melanogaster (Fruit fly).